A 2531-amino-acid polypeptide reads, in one-letter code: Putative neurobeachin homolog (2531 aa).

3 stretches are compositionally biased toward acidic residues: residues 1–10 (MDISETEYND), 26–35 (EDEVNDEESN), and 62–74 (EPSD…EESE). 4 disordered regions span residues 1–101 (MDIS…SPPP), 1363–1398 (NDGD…DNGG), 1420–1440 (EELK…MPPQ), and 1642–1670 (RFVP…EISE). Positions 1363–1379 (NDGDHASIKNGSDHSEN) are enriched in basic and acidic residues. Residues 1427–1440 (QSNGRRPSTLMPPQ) show a composition bias toward polar residues. Residues 1650–1670 (SRHEEANLPEGEKNEEPEISE) are compositionally biased toward basic and acidic residues. In terms of domain architecture, BEACH-type PH spans 1714-1822 (PSSQSACFST…TVRKVVYQLP (109 aa)). A BEACH domain is found at 1841–2130 (MTPRQLFKHS…QLLAEAHPPR (290 aa)). WD repeat units follow at residues 2289-2332 (GHGD…GFIA), 2350-2389 (GHEA…LRRI), 2429-2468 (LSEE…KLYT), and 2471-2510 (PLNS…WHYE).

This sequence belongs to the WD repeat neurobeachin family. Interacts with RII subunit of PKA.

The protein resides in the cytoplasm. It is found in the membrane. The protein localises to the nucleus. Binds to type II regulatory subunits of protein kinase A and anchors/targets them to the membrane. May anchor the kinase to cytoskeletal and/or organelle-associated proteins. Regulates endosomal traffic in polarized epithelial cells such as the vulval precursor cells and intestinal cells. Thought to act as a negative regulator of lin-12 activity in vulval precursor cells. May have a role in the internalization process from basolateral surface of polarized epithelial cells. This chain is Putative neurobeachin homolog, found in Caenorhabditis briggsae.